Reading from the N-terminus, the 252-residue chain is 5-oxoprolinase subunit A (252 aa).

This sequence belongs to the LamB/PxpA family. In terms of assembly, forms a complex composed of PxpA, PxpB and PxpC.

The enzyme catalyses 5-oxo-L-proline + ATP + 2 H2O = L-glutamate + ADP + phosphate + H(+). Its function is as follows. Catalyzes the cleavage of 5-oxoproline to form L-glutamate coupled to the hydrolysis of ATP to ADP and inorganic phosphate. The chain is 5-oxoprolinase subunit A from Corynebacterium glutamicum (strain R).